The sequence spans 251 residues: Small ribosomal subunit protein uS2 (251 aa).

It belongs to the universal ribosomal protein uS2 family.

This Aromatoleum aromaticum (strain DSM 19018 / LMG 30748 / EbN1) (Azoarcus sp. (strain EbN1)) protein is Small ribosomal subunit protein uS2.